Consider the following 120-residue polypeptide: Ribosome-binding factor A (120 aa).

This sequence belongs to the RbfA family. As to quaternary structure, monomer. Binds 30S ribosomal subunits, but not 50S ribosomal subunits or 70S ribosomes.

It localises to the cytoplasm. Functionally, one of several proteins that assist in the late maturation steps of the functional core of the 30S ribosomal subunit. Associates with free 30S ribosomal subunits (but not with 30S subunits that are part of 70S ribosomes or polysomes). Required for efficient processing of 16S rRNA. May interact with the 5'-terminal helix region of 16S rRNA. This Fusobacterium nucleatum subsp. nucleatum (strain ATCC 25586 / DSM 15643 / BCRC 10681 / CIP 101130 / JCM 8532 / KCTC 2640 / LMG 13131 / VPI 4355) protein is Ribosome-binding factor A.